Reading from the N-terminus, the 147-residue chain is Testis-expressed protein 29 (147 aa).

Residues 1 to 57 (MRYAPEFKKSPSHLLKKFAVCDIPLYDICDYNVSRDRCKELGCCFYKGICYEKAVPS) are Extracellular-facing. A helical membrane pass occupies residues 58–78 (YVQVFSALIVIIAGAFVITII). The Cytoplasmic portion of the chain corresponds to 79 to 147 (YRVIQESRRE…IVTEEEETED (69 aa)). Residues 86–147 (RREKEVPTEA…IVTEEEETED (62 aa)) form a disordered region. Over residues 99-108 (AKSSVQVETQ) the composition is skewed to polar residues. Residues 109–120 (PPSSAGAGSKAP) show a composition bias toward low complexity. Basic and acidic residues predominate over residues 125-135 (PQSKESGREDA).

The protein localises to the membrane. The protein is Testis-expressed protein 29 (TEX29) of Bos taurus (Bovine).